Reading from the N-terminus, the 515-residue chain is Putative ammonium transporter 2 (515 aa).

Transmembrane regions (helical) follow at residues 34 to 54 (GVWM…FGLL), 72 to 92 (VFDV…LTFG), 124 to 144 (GISY…STIV), 156 to 176 (SHCF…HWVW), 191 to 211 (AGCS…TLYL), 226 to 246 (VSDP…WLAF), 266 to 286 (AVGT…ITRL), 291 to 311 (IQMD…TGGC), 321 to 337 (LVGA…YPVT), 346 to 366 (VGVF…PAIF), 381 to 401 (FQTS…LLFL), and 404 to 424 (FVIL…LFLI).

This sequence belongs to the ammonia transporter channel (TC 1.A.11.2) family.

The protein localises to the membrane. In terms of biological role, involved in the uptake of ammonia. Implicated in aging. The sequence is that of Putative ammonium transporter 2 (amt-2) from Caenorhabditis elegans.